A 167-amino-acid polypeptide reads, in one-letter code: NAD(P)H-quinone oxidoreductase subunit I, chloroplastic (167 aa).

4Fe-4S ferredoxin-type domains lie at 55–84 (GRIHFEFDKCIACEVCVRVCPIDLPVVDWK) and 95–124 (LNYSIDFGICIFCGNCVEYCPTNCLSMTEE). [4Fe-4S] cluster is bound by residues Cys-64, Cys-67, Cys-70, Cys-74, Cys-104, Cys-107, Cys-110, and Cys-114.

This sequence belongs to the complex I 23 kDa subunit family. In terms of assembly, NDH is composed of at least 16 different subunits, 5 of which are encoded in the nucleus. [4Fe-4S] cluster serves as cofactor.

The protein resides in the plastid. The protein localises to the chloroplast thylakoid membrane. It catalyses the reaction a plastoquinone + NADH + (n+1) H(+)(in) = a plastoquinol + NAD(+) + n H(+)(out). The enzyme catalyses a plastoquinone + NADPH + (n+1) H(+)(in) = a plastoquinol + NADP(+) + n H(+)(out). In terms of biological role, NDH shuttles electrons from NAD(P)H:plastoquinone, via FMN and iron-sulfur (Fe-S) centers, to quinones in the photosynthetic chain and possibly in a chloroplast respiratory chain. The immediate electron acceptor for the enzyme in this species is believed to be plastoquinone. Couples the redox reaction to proton translocation, and thus conserves the redox energy in a proton gradient. This chain is NAD(P)H-quinone oxidoreductase subunit I, chloroplastic, found in Panax ginseng (Korean ginseng).